Here is a 443-residue protein sequence, read N- to C-terminus: Serine/threonine-protein kinase Nek2 (443 aa).

Positions 8-271 (YEVLHSIGTG…VEEILESPLI (264 aa)) constitute a Protein kinase domain. Residues 14–22 (IGTGSYGRC) and lysine 37 contribute to the ATP site. Aspartate 141 acts as the Proton acceptor in catalysis. Threonine 170 is subject to Phosphothreonine; by autocatalysis. Residue serine 171 is modified to Phosphoserine; by autocatalysis. Phosphothreonine; by autocatalysis is present on residues threonine 175 and threonine 179. At serine 184 the chain carries Phosphoserine. Residue serine 241 is modified to Phosphoserine; by autocatalysis. The tract at residues 264-443 (EILESPLIAD…LKSRQILGMR (180 aa)) is interaction with PCNT. Basic and acidic residues predominate over residues 282-292 (NLERRGRRSGE). The segment at 282–303 (NLERRGRRSGEPSKLPDSSPVL) is disordered. Serine 300 carries the post-translational modification Phosphoserine. Residues 301 to 443 (PVLSELKLKE…LKSRQILGMR (143 aa)) form an interaction with CEP85 region. Residues 303 to 361 (LSELKLKERQLQDREQALRAREDILEQKERELCIRERLAEDKLARAESLMKNYSLLKEH) adopt a coiled-coil conformation. The segment at 306-334 (LKLKERQLQDREQALRAREDILEQKEREL) is leucine-zipper. The necessary for interaction with MAD1L1 stretch occupies residues 329–443 (QKERELCIRE…LKSRQILGMR (115 aa)). A required for microtubule binding and for localization to the centrosomes region spans residues 333-370 (ELCIRERLAEDKLARAESLMKNYSLLKEHRLLCLAGGP). Residue serine 356 is modified to Phosphoserine; by STK3/MST2. Residues 383-402 (VHFHGESKENTARSENSESY) are disordered. Positions 385 to 398 (FHGESKENTARSEN) are enriched in basic and acidic residues. Phosphoserine occurs at positions 389, 396, and 401. The segment at 402–437 (YLAKSKCRDLKKRLHAAQLRAQALADIEKNYQLKSR) is interaction with SAV1 and STK3/MST2. Residues 403-427 (LAKSKCRDLKKRLHAAQLRAQALAD) are a coiled coil. The residue at position 436 (serine 436) is a Phosphoserine; by STK3/MST2.

This sequence belongs to the protein kinase superfamily. NEK Ser/Thr protein kinase family. NIMA subfamily. As to quaternary structure, forms homodimers and heterodimers. Interacts with CDC20, CTNB1, MAD1L1, MAD2L1, MAPK, NEK11, NPM1, NDC80, PCNT, PPP1CA, PPP1CC and SGO1. Interacts with STK3/MST2 (via SARAH domain) and SAV1 (via SARAH domain). Interacts with NECAB3 and HMGA2. Interacts with CEP68; the interaction leads to phosphorylation of CEP68. Interacts with CNTLN; the interaction leads to phosphorylation of CNTLN. Interacts with CEP85. Mg(2+) is required as a cofactor. Post-translationally, activated by autophosphorylation. Protein phosphatase 1 represses autophosphorylation and activation of isoform 1 by dephosphorylation. Phosphorylation by STK3/MST2 is necessary for its localization to the centrosome. Most abundantly expressed in testis. Low levels found in mid-gestation embryo, ovary, placenta, intestine, thymus and skin. Within the testis, expression restricted to germ cells with highest levels detected in spermatocytes at pachytene and diplotene stages. Also expressed in meiotic pachytene oocytes.

The protein resides in the nucleus. It localises to the nucleolus. It is found in the cytoplasm. The protein localises to the cytoskeleton. Its subcellular location is the microtubule organizing center. The protein resides in the centrosome. It localises to the spindle pole. It is found in the chromosome. The protein localises to the centromere. Its subcellular location is the kinetochore. The catalysed reaction is L-seryl-[protein] + ATP = O-phospho-L-seryl-[protein] + ADP + H(+). The enzyme catalyses L-threonyl-[protein] + ATP = O-phospho-L-threonyl-[protein] + ADP + H(+). Its catalytic activity is inhibited by the inhibitor CCT241950. In the presence of this inhibitor, displays an autoinhibited conformation: Tyr-70 side chain points into the active site, interacts with the activation loop, and blocks the alphaC helix. Functionally, protein kinase which is involved in the control of centrosome separation and bipolar spindle formation in mitotic cells and chromatin condensation in meiotic cells. Regulates centrosome separation (essential for the formation of bipolar spindles and high-fidelity chromosome separation) by phosphorylating centrosomal proteins such as CROCC, CEP250 and NINL, resulting in their displacement from the centrosomes. Regulates kinetochore microtubule attachment stability in mitosis via phosphorylation of NDC80. Involved in regulation of mitotic checkpoint protein complex via phosphorylation of CDC20 and MAD2L1. Plays an active role in chromatin condensation during the first meiotic division through phosphorylation of HMGA2. Phosphorylates: PPP1CC; SGO1; NECAB3 and NPM1. Essential for localization of MAD2L1 to kinetochore and MAPK1 and NPM1 to the centrosome. Phosphorylates CEP68 and CNTLN directly or indirectly. NEK2-mediated phosphorylation of CEP68 promotes CEP68 dissociation from the centrosome and its degradation at the onset of mitosis. Phosphorylates and activates NEK11 in G1/S-arrested cells. Involved in the regulation of centrosome disjunction. The sequence is that of Serine/threonine-protein kinase Nek2 (Nek2) from Mus musculus (Mouse).